Consider the following 579-residue polypeptide: Nif-specific regulatory protein (579 aa).

The region spanning 40–187 (DPVAEVPQIF…MVASLLEQAL (148 aa)) is the GAF domain. Residues 226–454 (IVGSSPAIAE…LENCVNRAAA (229 aa)) enclose the Sigma-54 factor interaction domain. ATP contacts are provided by residues 254–261 (GESGTGKE) and 317–326 (ADGGTLFLDE). The inter-domain linker stretch occupies residues 464–536 (EELACRQGAC…PLRTKTAQLS (73 aa)). A divalent metal cation is bound by residues Cys468 and Cys473. Residues 502–529 (RVSAPPPEPAPAPEPAPEAPPREEVPLR) are disordered. 7 tandem repeats follow at residues 505–506 (AP), 507–508 (PP), 509–510 (EP), 511–512 (AP), 513–514 (AP), 515–516 (EP), and 517–518 (AP). Residues 505–518 (APPPEPAPAPEPAP) are 7 X 2 AA tandem repeats of X-P. A compositionally biased stretch (pro residues) spans 505–520 (APPPEPAPAPEPAPEA). Residues 537-579 (REELLRALESAGWVQAKAARLLGMTPRQIAYALQKFEIELRKI) are C-terminal DNA-binding domain. Positions 551–570 (QAKAARLLGMTPRQIAYALQ) form a DNA-binding region, H-T-H motif.

In terms of assembly, interacts with sigma-54.

In terms of biological role, required for activation of most nif operons, which are directly involved in nitrogen fixation. The polypeptide is Nif-specific regulatory protein (nifA1) (Rhodobacter capsulatus (strain ATCC BAA-309 / NBRC 16581 / SB1003)).